We begin with the raw amino-acid sequence, 271 residues long: Type III pantothenate kinase (271 aa).

Aspartate 6–valine 13 provides a ligand contact to ATP. A substrate-binding site is contributed by glycine 109–arginine 112. Catalysis depends on aspartate 111, which acts as the Proton acceptor. Aspartate 131 contacts K(+). Serine 134 provides a ligand contact to ATP. Threonine 186 contacts substrate.

Belongs to the type III pantothenate kinase family. In terms of assembly, homodimer. Requires NH4(+) as cofactor. K(+) serves as cofactor.

It localises to the cytoplasm. The catalysed reaction is (R)-pantothenate + ATP = (R)-4'-phosphopantothenate + ADP + H(+). The protein operates within cofactor biosynthesis; coenzyme A biosynthesis; CoA from (R)-pantothenate: step 1/5. Its function is as follows. Catalyzes the phosphorylation of pantothenate (Pan), the first step in CoA biosynthesis. This chain is Type III pantothenate kinase, found in Mycobacteroides abscessus (strain ATCC 19977 / DSM 44196 / CCUG 20993 / CIP 104536 / JCM 13569 / NCTC 13031 / TMC 1543 / L948) (Mycobacterium abscessus).